Consider the following 2472-residue polypeptide: Highly reducing polyketide synthase xilA (2472 aa).

The 417-residue stretch at 1-417 (MPGGVRDLPA…GTNGHCIIDD (417 aa)) folds into the Ketosynthase family 3 (KS3) domain. Catalysis depends on for beta-ketoacyl synthase activity residues Cys-162, His-298, and His-340. Positions 442–502 (NDINGKSGTN…QRKHHHPKTD (61 aa)) are disordered. Low complexity predominate over residues 450-489 (TNGANGANRVNGVNGVNGVNGVNGANGHSNASLLSNGSNN). Residues 597–932 (FIFTGQGAQW…CTGTLFVHNV (336 aa)) enclose the Malonyl-CoA:ACP transacylase (MAT) domain. The N-terminal hotdog fold stretch occupies residues 991–1129 (HDLLGSKVPG…GQIKVEVAKF (139 aa)). In terms of domain architecture, PKS/mFAS DH spans 991 to 1294 (HDLLGSKVPG…FTSLNNEQES (304 aa)). The active-site Proton acceptor; for dehydratase activity is the His-1023. The tract at residues 1141-1294 (GRLVDAQTWY…FTSLNNEQES (154 aa)) is C-terminal hotdog fold. Asp-1207 (proton donor; for dehydratase activity) is an active-site residue. A methyltransferase (CMeT) domain region spans residues 1289–1505 (NNEQESPSTG…IITVHALRSI (217 aa)). One can recognise an Enoyl reductase (ER) domain in the interval 1724-2036 (GLLTSLYFKP…KGTHIGKMVI (313 aa)). The 180-residue stretch at 2060–2239 (ASYILVGGLS…ATTVSLGFIK (180 aa)) folds into the Ketoreductase (KR) domain. Residues 2391 to 2469 (ETVKLVSDAI…SIARVIVEEA (79 aa)) enclose the Carrier domain. O-(pantetheine 4'-phosphoryl)serine is present on Ser-2428.

Pantetheine 4'-phosphate serves as cofactor.

It participates in secondary metabolite biosynthesis. Its function is as follows. Highly reducing polyketide synthase; part of the gene cluster that mediates the biosynthesis of the 6-methyl-2-pyrone derivative xylariolide D. XilA produces the 5-alkyl-6-methyl-2-pyrone backbone called prexylariolide D via sequential condensations of 4 malonyl-CoA units with one acetyl-CoA starter unit. During the biosynthesis, the linear polyketide chain is branched by the addition of an acetyl unit as the origin of the methyl group at the 2-pyrone ring. Prexylariolide D is then hydroxylated at the side chain by xilC to form the final product, xylariolide D. The polypeptide is Highly reducing polyketide synthase xilA (Penicillium crustosum (Blue mold fungus)).